We begin with the raw amino-acid sequence, 428 residues long: Adenylosuccinate synthetase (428 aa).

Residues 12 to 18 and 40 to 42 each bind GTP; these read GDEGKGK and GHT. Aspartate 13 acts as the Proton acceptor in catalysis. Positions 13 and 40 each coordinate Mg(2+). IMP is bound by residues 13 to 16, 38 to 41, threonine 128, arginine 142, glutamine 223, threonine 238, and arginine 302; these read DEGK and NAGH. The active-site Proton donor is histidine 41. Residue 298–304 participates in substrate binding; the sequence is VTTGRPR. GTP contacts are provided by residues arginine 304, 330-332, and 412-414; these read KLD and GTG.

Belongs to the adenylosuccinate synthetase family. In terms of assembly, homodimer. Requires Mg(2+) as cofactor.

It is found in the cytoplasm. The catalysed reaction is IMP + L-aspartate + GTP = N(6)-(1,2-dicarboxyethyl)-AMP + GDP + phosphate + 2 H(+). The protein operates within purine metabolism; AMP biosynthesis via de novo pathway; AMP from IMP: step 1/2. In terms of biological role, plays an important role in the de novo pathway of purine nucleotide biosynthesis. Catalyzes the first committed step in the biosynthesis of AMP from IMP. The chain is Adenylosuccinate synthetase from Bifidobacterium animalis subsp. lactis (strain AD011).